The sequence spans 141 residues: Large ribosomal subunit protein uL11A (141 aa).

Belongs to the universal ribosomal protein uL11 family. As to quaternary structure, part of the ribosomal stalk of the 50S ribosomal subunit. Interacts with L10 and the large rRNA to form the base of the stalk. L10 forms an elongated spine to which L12 dimers bind in a sequential fashion forming a multimeric L10(L12)X complex. In terms of processing, one or more lysine residues are methylated.

Its function is as follows. Forms part of the ribosomal stalk which helps the ribosome interact with GTP-bound translation factors. The chain is Large ribosomal subunit protein uL11A from Bacillus cereus (strain ATCC 14579 / DSM 31 / CCUG 7414 / JCM 2152 / NBRC 15305 / NCIMB 9373 / NCTC 2599 / NRRL B-3711).